The chain runs to 410 residues: Multidrug resistance protein MdtA (410 aa).

Positions Met1–Ala21 are cleaved as a signal peptide. The interval Ser36 to Pro56 is disordered.

Belongs to the membrane fusion protein (MFP) (TC 8.A.1) family. As to quaternary structure, part of a tripartite efflux system composed of MdtA, MdtB and MdtC.

It localises to the cell inner membrane. The polypeptide is Multidrug resistance protein MdtA (Pantoea ananatis (strain AJ13355)).